A 299-amino-acid polypeptide reads, in one-letter code: Homoserine kinase (299 aa).

Residue 88–98 (PLGRGLGSSAT) coordinates ATP.

It belongs to the GHMP kinase family. Homoserine kinase subfamily.

The protein localises to the cytoplasm. It carries out the reaction L-homoserine + ATP = O-phospho-L-homoserine + ADP + H(+). The protein operates within amino-acid biosynthesis; L-threonine biosynthesis; L-threonine from L-aspartate: step 4/5. In terms of biological role, catalyzes the ATP-dependent phosphorylation of L-homoserine to L-homoserine phosphate. The polypeptide is Homoserine kinase (Gloeobacter violaceus (strain ATCC 29082 / PCC 7421)).